The sequence spans 412 residues: NAD-dependent dihydropyrimidine dehydrogenase subunit PreT (412 aa).

Residue Glu286 coordinates NAD(+).

It belongs to the NADH dehydrogenase family. Heterotetramer of 2 PreA and 2 PreT subunits.

The catalysed reaction is 5,6-dihydrouracil + NAD(+) = uracil + NADH + H(+). The enzyme catalyses 5,6-dihydrothymine + NAD(+) = thymine + NADH + H(+). Involved in pyrimidine base degradation. Catalyzes physiologically the reduction of uracil to 5,6-dihydrouracil (DHU) by using NADH as a specific cosubstrate. It also catalyzes the reverse reaction and the reduction of thymine to 5,6-dihydrothymine (DHT). In Escherichia coli O157:H7, this protein is NAD-dependent dihydropyrimidine dehydrogenase subunit PreT (preT).